The primary structure comprises 61 residues: Large ribosomal subunit protein eL37 (61 aa).

Zn(2+) contacts are provided by Cys20, Cys23, Cys35, and Cys38. The segment at 20 to 38 (CPRCGRHSYNIVKGYCAAC) adopts a C4-type zinc-finger fold.

It belongs to the eukaryotic ribosomal protein eL37 family. Zn(2+) serves as cofactor.

Binds to the 23S rRNA. This chain is Large ribosomal subunit protein eL37, found in Caldivirga maquilingensis (strain ATCC 700844 / DSM 13496 / JCM 10307 / IC-167).